Here is a 267-residue protein sequence, read N- to C-terminus: 4-hydroxy-tetrahydrodipicolinate reductase (267 aa).

Residues 9-14 (GAGGRM) and D35 contribute to the NAD(+) site. An NADP(+)-binding site is contributed by R36. NAD(+) contacts are provided by residues 99-101 (GTT) and 123-126 (AANY). H156 serves as the catalytic Proton donor/acceptor. H157 lines the (S)-2,3,4,5-tetrahydrodipicolinate pocket. The Proton donor role is filled by K160. Residue 166 to 167 (GT) coordinates (S)-2,3,4,5-tetrahydrodipicolinate.

This sequence belongs to the DapB family.

It localises to the cytoplasm. It carries out the reaction (S)-2,3,4,5-tetrahydrodipicolinate + NAD(+) + H2O = (2S,4S)-4-hydroxy-2,3,4,5-tetrahydrodipicolinate + NADH + H(+). It catalyses the reaction (S)-2,3,4,5-tetrahydrodipicolinate + NADP(+) + H2O = (2S,4S)-4-hydroxy-2,3,4,5-tetrahydrodipicolinate + NADPH + H(+). It functions in the pathway amino-acid biosynthesis; L-lysine biosynthesis via DAP pathway; (S)-tetrahydrodipicolinate from L-aspartate: step 4/4. Functionally, catalyzes the conversion of 4-hydroxy-tetrahydrodipicolinate (HTPA) to tetrahydrodipicolinate. The sequence is that of 4-hydroxy-tetrahydrodipicolinate reductase from Halorhodospira halophila (strain DSM 244 / SL1) (Ectothiorhodospira halophila (strain DSM 244 / SL1)).